A 690-amino-acid chain; its full sequence is Elongation factor G (690 aa).

The region spanning 8-283 (SKCRNIGIMA…AVVDYLPSPN (276 aa)) is the tr-type G domain. GTP-binding positions include 17 to 24 (AHIDAGKT), 81 to 85 (DTPGH), and 135 to 138 (NKMD).

It belongs to the TRAFAC class translation factor GTPase superfamily. Classic translation factor GTPase family. EF-G/EF-2 subfamily.

The protein localises to the cytoplasm. Functionally, catalyzes the GTP-dependent ribosomal translocation step during translation elongation. During this step, the ribosome changes from the pre-translocational (PRE) to the post-translocational (POST) state as the newly formed A-site-bound peptidyl-tRNA and P-site-bound deacylated tRNA move to the P and E sites, respectively. Catalyzes the coordinated movement of the two tRNA molecules, the mRNA and conformational changes in the ribosome. The protein is Elongation factor G of Anaplasma phagocytophilum (strain HZ).